A 155-amino-acid polypeptide reads, in one-letter code: 6,7-dimethyl-8-ribityllumazine synthase (155 aa).

5-amino-6-(D-ribitylamino)uracil is bound by residues Trp-24, Ala-58 to Glu-60, and Ala-82 to Ile-84. A (2S)-2-hydroxy-3-oxobutyl phosphate-binding site is contributed by Gly-87–Thr-88. Residue His-90 is the Proton donor of the active site. Phe-115 contacts 5-amino-6-(D-ribitylamino)uracil. Arg-129 contributes to the (2S)-2-hydroxy-3-oxobutyl phosphate binding site.

The protein belongs to the DMRL synthase family. Forms an icosahedral capsid composed of 60 subunits, arranged as a dodecamer of pentamers.

It catalyses the reaction (2S)-2-hydroxy-3-oxobutyl phosphate + 5-amino-6-(D-ribitylamino)uracil = 6,7-dimethyl-8-(1-D-ribityl)lumazine + phosphate + 2 H2O + H(+). It participates in cofactor biosynthesis; riboflavin biosynthesis; riboflavin from 2-hydroxy-3-oxobutyl phosphate and 5-amino-6-(D-ribitylamino)uracil: step 1/2. Catalyzes the formation of 6,7-dimethyl-8-ribityllumazine by condensation of 5-amino-6-(D-ribitylamino)uracil with 3,4-dihydroxy-2-butanone 4-phosphate. This is the penultimate step in the biosynthesis of riboflavin. In Saccharophagus degradans (strain 2-40 / ATCC 43961 / DSM 17024), this protein is 6,7-dimethyl-8-ribityllumazine synthase.